Here is a 184-residue protein sequence, read N- to C-terminus: Endoribonuclease YbeY (184 aa).

Residues His-151, His-155, and His-161 each contribute to the Zn(2+) site.

Belongs to the endoribonuclease YbeY family. It depends on Zn(2+) as a cofactor.

The protein resides in the cytoplasm. In terms of biological role, single strand-specific metallo-endoribonuclease involved in late-stage 70S ribosome quality control and in maturation of the 3' terminus of the 16S rRNA. This is Endoribonuclease YbeY from Prochlorococcus marinus (strain NATL2A).